The chain runs to 598 residues: Major royal jelly protein 5 (598 aa).

Residues 1 to 17 (MTTWLLLVVCLGIACQG) form the signal peptide. Asn148, Asn164, Asn181, and Asn324 each carry an N-linked (GlcNAc...) asparagine glycan.

Belongs to the major royal jelly protein family. As to expression, found in and secreted from the hypopharyngeal glands of the worker honey bee (at protein level); expression peaks at 8 days post eclosion. Expressed in the brains of adult worker bees peaking at 12 days post eclosion (at protein level). Expressed in the spermatheca of adult queen bees (at protein level); Expression levels are higher in mated queens than in virgin queens. Expressed in the heads of worker bees after eclosion, expression dropping with age and detectable up to 26 days of age.

It localises to the secreted. Component of royal jelly, a substance produced in the hypopharyngeal gland containing proteins, free amino acids, fatty acids, sugars and other nutrients, which is fed to developing larvae by worker nurse bees. Major royal jelly proteins (MRJPs) are high in essential amino acids and probably have a nutritional function in larval food. All larvae are fed some royal jelly (also known as worker jelly) early in their development but it forms the principal source of nutrition for larvae destined to become queen bees. Produced in the spermatheca of adult queen bees, along with other major royal jelly proteins, where it may act as a nutrient supply for sperm stored by mated queens, or be involved in energy metabolism. The polypeptide is Major royal jelly protein 5 (Apis mellifera (Honeybee)).